Consider the following 181-residue polypeptide: Adenylate kinase (181 aa).

Position 10–15 (10–15 (GAGKGT)) interacts with ATP. The interval 30-59 (STGDLFRANIGEGTPLGLEAKSYIDAGKLV) is NMP. Residues Thr-31, Arg-36, 57-59 (KLV), 85-88 (GFPR), and Gln-92 each bind AMP. The LID stretch occupies residues 126–132 (ARGRADD). Residue Arg-127 coordinates ATP. Arg-129 and Arg-140 together coordinate AMP. Position 166 (Gly-166) interacts with ATP.

The protein belongs to the adenylate kinase family. Monomer.

The protein resides in the cytoplasm. It catalyses the reaction AMP + ATP = 2 ADP. The protein operates within purine metabolism; AMP biosynthesis via salvage pathway; AMP from ADP: step 1/1. In terms of biological role, catalyzes the reversible transfer of the terminal phosphate group between ATP and AMP. Plays an important role in cellular energy homeostasis and in adenine nucleotide metabolism. This is Adenylate kinase from Corynebacterium aurimucosum (strain ATCC 700975 / DSM 44827 / CIP 107346 / CN-1) (Corynebacterium nigricans).